The chain runs to 179 residues: tRNA (cytidine(56)-2'-O)-methyltransferase (179 aa).

Leu84 serves as a coordination point for S-adenosyl-L-methionine.

The protein belongs to the aTrm56 family. In terms of assembly, homodimer.

The protein localises to the cytoplasm. The catalysed reaction is cytidine(56) in tRNA + S-adenosyl-L-methionine = 2'-O-methylcytidine(56) in tRNA + S-adenosyl-L-homocysteine + H(+). Functionally, specifically catalyzes the AdoMet-dependent 2'-O-ribose methylation of cytidine at position 56 in tRNAs. The chain is tRNA (cytidine(56)-2'-O)-methyltransferase from Methanothermobacter thermautotrophicus (strain ATCC 29096 / DSM 1053 / JCM 10044 / NBRC 100330 / Delta H) (Methanobacterium thermoautotrophicum).